The sequence spans 108 residues: ATP-dependent Clp protease adapter protein ClpS (108 aa).

Belongs to the ClpS family. As to quaternary structure, binds to the N-terminal domain of the chaperone ClpA.

Functionally, involved in the modulation of the specificity of the ClpAP-mediated ATP-dependent protein degradation. In Mycobacterium leprae (strain TN), this protein is ATP-dependent Clp protease adapter protein ClpS.